The primary structure comprises 1836 residues: Druantia protein DruE (1836 aa).

The 298-residue stretch at 108–405 folds into the Helicase ATP-binding domain; sequence SFLGEDASDL…FAQDLTGLSP (298 aa). 121 to 128 lines the ATP pocket; sequence TGTGSGKT. The DEAH box motif lies at 347–350; sequence DEAH. Positions 1014 to 1199 constitute a Helicase C-terminal domain; sequence DCTALMPFAL…EVKVNNPKIA (186 aa).

The protein resides in the cytoplasm. Its function is as follows. Component of antiviral defense system Druantia type I, composed of DruA, DruB, DruC, DruD and DruE. Expression of Druantia in E.coli (strain MG1655) confers resistance to phage lambda, SECphi18, SECphi27 and T4. This protein is probably a helicase. The polypeptide is Druantia protein DruE (Escherichia coli (strain UMEA 4076-1)).